The chain runs to 1083 residues: FACT complex subunit spt16 (1083 aa).

Phosphoserine is present on S437. A coiled-coil region spans residues 466–504 (LESKLRNEINTEEKRKEHQRELAQQLNERAKDRLARQGN). Residues 923–1083 (FEQGGWTFLD…NGHKSKKSRH (161 aa)) are disordered. Positions 935–987 (SGSEGENETAESEEDEAYNPTDAESDEESDEDSEYSEASEDSEESDEDLGSDE) are enriched in acidic residues. Basic and acidic residues predominate over residues 988–1023 (ESGKDWSDLEREAAEEDRNHDYAADDKPRNGKFDSK). A compositionally biased stretch (basic residues) spans 1024-1033 (KHGKSSKHSP). Over residues 1058–1076 (SSKDKDRKRSRDDSRDNGH) the composition is skewed to basic and acidic residues.

Belongs to the peptidase M24 family. SPT16 subfamily. As to quaternary structure, component of the FACT complex, a stable heterodimer of dre4/spt16 and Ssrp. Interacts with TRL/GAGA.

The protein resides in the nucleus. It is found in the chromosome. In terms of biological role, component of the FACT complex, a general chromatin factor that acts to reorganize nucleosomes. The FACT complex is involved in multiple processes that require DNA as a template such as mRNA elongation, DNA replication and DNA repair. During transcription elongation the FACT complex acts as a histone chaperone that both destabilizes and restores nucleosomal structure. It facilitates the passage of RNA polymerase II and transcription by promoting the dissociation of one histone H2A-H2B dimer from the nucleosome, then subsequently promotes the reestablishment of the nucleosome following the passage of RNA polymerase II. The FACT complex is required for expression of Hox genes. This chain is FACT complex subunit spt16 (dre4), found in Drosophila melanogaster (Fruit fly).